The sequence spans 564 residues: Phosphoinositide phospholipase C 3 (564 aa).

Positions 19–54 constitute an EF-hand domain; it reads TRQPPVSIKRLFEAYSRNGKMSFDELLRFVSEVQGE. The region spanning 106–250 is the PI-PLC X-box domain; the sequence is HDMKAPLSHY…LKGKILISTK (145 aa). Catalysis depends on residues His-121 and His-167. In terms of domain architecture, PI-PLC Y-box spans 296-412; the sequence is RDLIAIHAAN…GYVKKPRILL (117 aa). The region spanning 406 to 539 is the C2 domain; it reads KKPRILLDEH…KSGVRAVRLH (134 aa). 5 residues coordinate Ca(2+): Asp-450, Asp-456, Asp-509, Asp-511, and Asp-517.

It depends on Ca(2+) as a cofactor. As to expression, expressed in leaves, roots and siliques, but not in flowers.

It localises to the cell membrane. The catalysed reaction is a 1,2-diacyl-sn-glycero-3-phospho-(1D-myo-inositol-4,5-bisphosphate) + H2O = 1D-myo-inositol 1,4,5-trisphosphate + a 1,2-diacyl-sn-glycerol + H(+). Functionally, the production of the second messenger molecules diacylglycerol (DAG) and inositol 1,4,5-trisphosphate (IP3) is mediated by activated phosphatidylinositol-specific phospholipase C enzymes. This is Phosphoinositide phospholipase C 3 (PLC3) from Arabidopsis thaliana (Mouse-ear cress).